Here is a 166-residue protein sequence, read N- to C-terminus: NAD(P)H-quinone oxidoreductase subunit I, chloroplastic (166 aa).

4Fe-4S ferredoxin-type domains follow at residues 55-84 and 95-124; these read GRIH…VDWK and LNYS…MTEE. The [4Fe-4S] cluster site is built by Cys64, Cys67, Cys70, Cys74, Cys104, Cys107, Cys110, and Cys114.

Belongs to the complex I 23 kDa subunit family. NDH is composed of at least 16 different subunits, 5 of which are encoded in the nucleus. The cofactor is [4Fe-4S] cluster.

It localises to the plastid. Its subcellular location is the chloroplast thylakoid membrane. It catalyses the reaction a plastoquinone + NADH + (n+1) H(+)(in) = a plastoquinol + NAD(+) + n H(+)(out). It carries out the reaction a plastoquinone + NADPH + (n+1) H(+)(in) = a plastoquinol + NADP(+) + n H(+)(out). Functionally, NDH shuttles electrons from NAD(P)H:plastoquinone, via FMN and iron-sulfur (Fe-S) centers, to quinones in the photosynthetic chain and possibly in a chloroplast respiratory chain. The immediate electron acceptor for the enzyme in this species is believed to be plastoquinone. Couples the redox reaction to proton translocation, and thus conserves the redox energy in a proton gradient. In Acanthospermum australe (Paraguayan starburr), this protein is NAD(P)H-quinone oxidoreductase subunit I, chloroplastic.